We begin with the raw amino-acid sequence, 355 residues long: DNA polymerase IV (355 aa).

In terms of domain architecture, UmuC spans 4–185; that stretch reads IIHVDMDCFY…LPLKKIPGVG (182 aa). Residues Asp8 and Asp103 each contribute to the Mg(2+) site. Glu104 is an active-site residue.

This sequence belongs to the DNA polymerase type-Y family. In terms of assembly, monomer. Mg(2+) serves as cofactor.

It localises to the cytoplasm. It carries out the reaction DNA(n) + a 2'-deoxyribonucleoside 5'-triphosphate = DNA(n+1) + diphosphate. In terms of biological role, poorly processive, error-prone DNA polymerase involved in untargeted mutagenesis. Copies undamaged DNA at stalled replication forks, which arise in vivo from mismatched or misaligned primer ends. These misaligned primers can be extended by PolIV. Exhibits no 3'-5' exonuclease (proofreading) activity. May be involved in translesional synthesis, in conjunction with the beta clamp from PolIII. This is DNA polymerase IV from Pasteurella multocida (strain Pm70).